The primary structure comprises 129 residues: uncharacterized protein (129 aa).

Residues Gln6–Gln129 enclose the VOC domain. A divalent metal cation contacts are provided by His9, Glu57, His78, and Glu125.

The protein to B.subtilis YwkD.

This is an uncharacterized protein from Escherichia coli (strain K12).